The chain runs to 286 residues: MATPRRPRVNPIDTTLSESALFAANRAVGEVSFDVQRVDGVTRRNRLHESGSLRVRFPSPEGEGLSAMFVNTAGGIAGGDRFAVDIAAGEGTRLTLTTAAAEKIYRSNGPTSRLDIALKVAAGAALHWLPQETILFDQARVERRFEIDVAEGAALLLAEIVVFGRAAMGERMLSGSFVDRWRLRRGGRLMFAETVRLDGDIGQKLARPAIANGGAAIGTALIVPGDEKLVERLREAAQHFRGEVGISAWNGFAMARFCAQDAVRLRADMMAVLGRTGAALPRLWLN.

The protein belongs to the UreD family. UreD, UreF and UreG form a complex that acts as a GTP-hydrolysis-dependent molecular chaperone, activating the urease apoprotein by helping to assemble the nickel containing metallocenter of UreC. The UreE protein probably delivers the nickel.

It is found in the cytoplasm. In terms of biological role, required for maturation of urease via the functional incorporation of the urease nickel metallocenter. The sequence is that of Urease accessory protein UreD from Rhodopseudomonas palustris (strain BisA53).